We begin with the raw amino-acid sequence, 360 residues long: Phosphoserine aminotransferase (360 aa).

R42 contributes to the L-glutamate binding site. Residues W102, T152, D171, and Q194 each coordinate pyridoxal 5'-phosphate. K195 is subject to N6-(pyridoxal phosphate)lysine. 237 to 238 (NT) is a binding site for pyridoxal 5'-phosphate.

This sequence belongs to the class-V pyridoxal-phosphate-dependent aminotransferase family. SerC subfamily. In terms of assembly, homodimer. It depends on pyridoxal 5'-phosphate as a cofactor.

It is found in the cytoplasm. It catalyses the reaction O-phospho-L-serine + 2-oxoglutarate = 3-phosphooxypyruvate + L-glutamate. The enzyme catalyses 4-(phosphooxy)-L-threonine + 2-oxoglutarate = (R)-3-hydroxy-2-oxo-4-phosphooxybutanoate + L-glutamate. It participates in amino-acid biosynthesis; L-serine biosynthesis; L-serine from 3-phospho-D-glycerate: step 2/3. Its pathway is cofactor biosynthesis; pyridoxine 5'-phosphate biosynthesis; pyridoxine 5'-phosphate from D-erythrose 4-phosphate: step 3/5. Its function is as follows. Catalyzes the reversible conversion of 3-phosphohydroxypyruvate to phosphoserine and of 3-hydroxy-2-oxo-4-phosphonooxybutanoate to phosphohydroxythreonine. The protein is Phosphoserine aminotransferase of Coxiella burnetii (strain RSA 493 / Nine Mile phase I).